The primary structure comprises 203 residues: Thymidine kinase (203 aa).

ATP-binding positions include 21-28 (GCMFAGKT) and 99-102 (DEIQ). Residue E100 is the Proton acceptor of the active site. 4 residues coordinate Zn(2+): C156, C159, C194, and C197.

The protein belongs to the thymidine kinase family. Homotetramer.

It localises to the cytoplasm. It carries out the reaction thymidine + ATP = dTMP + ADP + H(+). The protein is Thymidine kinase of Mesoplasma florum (strain ATCC 33453 / NBRC 100688 / NCTC 11704 / L1) (Acholeplasma florum).